The sequence spans 310 residues: 2-ketogluconate reductase (310 aa).

Residues 151 to 152 (HI) and 227 to 229 (IAR) contribute to the NADP(+) site. Residues Arg229 and Glu258 contribute to the active site. The active-site Proton donor is His276.

This sequence belongs to the D-isomer specific 2-hydroxyacid dehydrogenase family. As to quaternary structure, homohexamer.

It catalyses the reaction D-gluconate + NADP(+) = 2-dehydro-D-gluconate + NADPH + H(+). Its function is as follows. Catalyzes the reduction of 2-keto-D-gluconate to gluconate. Can also catalyze the reduction of 2-keto-L-gulonate. Can use both NADH and NADPH efficiently, with a slight preference for NADPH. This chain is 2-ketogluconate reductase, found in Gluconobacter oxydans (strain 621H) (Gluconobacter suboxydans).